A 228-amino-acid polypeptide reads, in one-letter code: Large ribosomal subunit protein uL3 (228 aa).

The protein belongs to the universal ribosomal protein uL3 family. Part of the 50S ribosomal subunit. Forms a cluster with proteins L14 and L19.

Its function is as follows. One of the primary rRNA binding proteins, it binds directly near the 3'-end of the 23S rRNA, where it nucleates assembly of the 50S subunit. The polypeptide is Large ribosomal subunit protein uL3 (Leuconostoc mesenteroides subsp. mesenteroides (strain ATCC 8293 / DSM 20343 / BCRC 11652 / CCM 1803 / JCM 6124 / NCDO 523 / NBRC 100496 / NCIMB 8023 / NCTC 12954 / NRRL B-1118 / 37Y)).